Here is a 110-residue protein sequence, read N- to C-terminus: Protein RnfH (110 aa).

Residues V90–R110 form a disordered region.

It belongs to the UPF0125 (RnfH) family.

The chain is Protein RnfH from Burkholderia mallei (strain NCTC 10229).